Reading from the N-terminus, the 1001-residue chain is uncharacterized protein (1001 aa).

Over residues 939-948 (KVVDNKRDAS) the composition is skewed to basic and acidic residues. The segment at 939–1001 (KVVDNKRDAS…HTSKRVQKKN (63 aa)) is disordered. S948 and S950 each carry phosphoserine.

This is an uncharacterized protein from Schizosaccharomyces pombe (strain 972 / ATCC 24843) (Fission yeast).